The following is a 262-amino-acid chain: Ribose-5-phosphate isomerase A (262 aa).

Substrate is bound by residues 33–36 (TGST), 89–92 (DGTD), and 102–105 (KGGG). The active-site Proton acceptor is the Glu-111. Lys-129 serves as a coordination point for substrate.

Belongs to the ribose 5-phosphate isomerase family. Homodimer.

The catalysed reaction is aldehydo-D-ribose 5-phosphate = D-ribulose 5-phosphate. It participates in carbohydrate degradation; pentose phosphate pathway; D-ribose 5-phosphate from D-ribulose 5-phosphate (non-oxidative stage): step 1/1. Functionally, catalyzes the reversible conversion of ribose-5-phosphate to ribulose 5-phosphate. In Jannaschia sp. (strain CCS1), this protein is Ribose-5-phosphate isomerase A.